We begin with the raw amino-acid sequence, 210 residues long: Large ribosomal subunit protein uL3 (210 aa).

Residues 126 to 152 (HGFRGGPKTHGQSDRHRAPGSIGAGTT) form a disordered region.

It belongs to the universal ribosomal protein uL3 family. As to quaternary structure, part of the 50S ribosomal subunit. Forms a cluster with proteins L14 and L19.

In terms of biological role, one of the primary rRNA binding proteins, it binds directly near the 3'-end of the 23S rRNA, where it nucleates assembly of the 50S subunit. This is Large ribosomal subunit protein uL3 from Chloroflexus aurantiacus (strain ATCC 29366 / DSM 635 / J-10-fl).